Here is a 775-residue protein sequence, read N- to C-terminus: Mitosis inducer protein kinase cdr2 (775 aa).

In terms of domain architecture, Protein kinase spans 10 to 262 (WELGLSLGSG…MEQIREHPFL (253 aa)). ATP is bound by residues 16–24 (LGSGGPNSS) and Lys-39. Asp-133 serves as the catalytic Proton acceptor. Residues Ser-309, Ser-311, and Ser-476 each carry the phosphoserine modification. A compositionally biased stretch (low complexity) spans 549-563 (NNIDNNNYNQPYANA). Residues 549–620 (NNIDNNNYNQ…TKKKLSGSPF (72 aa)) form a disordered region. The span at 584–593 (LSQSPASYDS) shows a compositional bias: polar residues. Phosphoserine is present on residues Ser-587 and Ser-632.

This sequence belongs to the protein kinase superfamily. CAMK Ser/Thr protein kinase family. NIM1 subfamily. Interacts with blt1 and mid1. In terms of processing, autophosphorylated.

It carries out the reaction L-seryl-[protein] + ATP = O-phospho-L-seryl-[protein] + ADP + H(+). It catalyses the reaction L-threonyl-[protein] + ATP = O-phospho-L-threonyl-[protein] + ADP + H(+). Acts as a mitotic inducer. In G2 it negatively regulates wee1, a mitotic inhibitor. Also has a role in cytokinesis where it required for proper septum formation. This chain is Mitosis inducer protein kinase cdr2 (cdr2), found in Schizosaccharomyces pombe (strain 972 / ATCC 24843) (Fission yeast).